The primary structure comprises 327 residues: Inactive peptidyl-prolyl cis-trans isomerase FKBP6 (327 aa).

A PPIase FKBP-type domain is found at 54-143 (DASVLVKYSG…LFEIELLDFL (90 aa)). 3 TPR repeats span residues 171–204 (AATE…LRRR), 219–252 (LPVL…DQKN), and 253–286 (AKAL…QPFN).

Belongs to the FKBP6 family. As to quaternary structure, interacts (via TPR repeats) with HSP90. Interacts with HSP72/HSPA2 and CLTC. Interacts with GAPDH; leading to inhibit GAPDH catalytic activity. In terms of tissue distribution, detected in all tissues examined, with higher expression in testis, heart, skeletal muscle, liver, and kidney.

The protein resides in the cytoplasm. It is found in the nucleus. Its function is as follows. Has an essential role in spermatogenesis. It is required to repress transposable elements and prevent their mobilization, which is essential for the germline integrity. Acts via the piRNA metabolic process, which mediates the repression of transposable elements during meiosis by forming complexes composed of piRNAs and Piwi proteins and govern the methylation and subsequent repression of transposons. Acts as a co-chaperone via its interaction with HSP90 and is required for the piRNA amplification process, the secondary piRNA biogenesis. May be required together with HSP90 in removal of 16 nucleotide ping-pong by-products from Piwi complexes, possibly facilitating turnover of Piwi complexes. In Homo sapiens (Human), this protein is Inactive peptidyl-prolyl cis-trans isomerase FKBP6 (FKBP6).